Here is a 489-residue protein sequence, read N- to C-terminus: COX3 mRNA-specific translational activator PET494 (489 aa).

It is found in the mitochondrion inner membrane. Its function is as follows. Required for the expression of the mitochondrial gene for cytochrome c oxidase subunit III (COX3). The polypeptide is COX3 mRNA-specific translational activator PET494 (PET494) (Saccharomyces bayanus (Yeast)).